We begin with the raw amino-acid sequence, 167 residues long: Insertion element IS1 4 protein InsB (167 aa).

The protein belongs to the transposase 27 family.

Functionally, absolutely required for transposition of IS1. The protein is Insertion element IS1 4 protein InsB (insB4) of Escherichia coli (strain K12).